Here is a 406-residue protein sequence, read N- to C-terminus: 2-epi-valiolone synthase (406 aa).

The segment at 1–21 is disordered; that stretch reads MPSTGSTPILAHDVKSPHRGS. Residues 105-108, 137-141, 161-162, K174, K183, and 201-204 contribute to the NAD(+) site; these read EPSK, GVLCD, TS, and CLAT. Residues E216, H287, and H304 each coordinate Zn(2+).

Belongs to the sugar phosphate cyclases superfamily. EVS family. Requires NAD(+) as cofactor. Co(2+) is required as a cofactor. The cofactor is Zn(2+).

It catalyses the reaction D-sedoheptulose 7-phosphate = 2-epi-valiolone + phosphate. In terms of biological role, catalyzes the conversion of sedoheptulose 7-phosphate to 2-epi-valiolone, which may serve as an alternative precursor for aminocyclitol biosynthesis. The sequence is that of 2-epi-valiolone synthase from Stigmatella aurantiaca (strain DW4/3-1).